The following is a 186-amino-acid chain: Sec-independent protein translocase protein TatB (186 aa).

The helical transmembrane segment at Met1–Gly21 threads the bilayer. Positions Asn120–Ser186 are disordered. Residues Ser177–Ser186 are compositionally biased toward polar residues.

This sequence belongs to the TatB family. In terms of assembly, the Tat system comprises two distinct complexes: a TatABC complex, containing multiple copies of TatA, TatB and TatC subunits, and a separate TatA complex, containing only TatA subunits. Substrates initially bind to the TatABC complex, which probably triggers association of the separate TatA complex to form the active translocon.

Its subcellular location is the cell inner membrane. Its function is as follows. Part of the twin-arginine translocation (Tat) system that transports large folded proteins containing a characteristic twin-arginine motif in their signal peptide across membranes. Together with TatC, TatB is part of a receptor directly interacting with Tat signal peptides. TatB may form an oligomeric binding site that transiently accommodates folded Tat precursor proteins before their translocation. The chain is Sec-independent protein translocase protein TatB from Haemophilus influenzae (strain ATCC 51907 / DSM 11121 / KW20 / Rd).